A 560-amino-acid polypeptide reads, in one-letter code: Serine palmitoyltransferase 2 (560 aa).

The chain crosses the membrane as a helical span at residues Pro65–Leu85. Lys377 is subject to N6-(pyridoxal phosphate)lysine.

The protein belongs to the class-II pyridoxal-phosphate-dependent aminotransferase family. As to quaternary structure, component of the serine palmitoyltransferase (SPT) complex, which is composed of SPTLC1, SPTLC2 or SPTLC3 and SPTSSA or SPTSSB. The heterodimer consisting of SPTLC1 and SPTLC2/SPTLC3 forms the catalytic core of the enzyme, while SPTSSA or SPTSSB subunits determine substrate specificity. SPT also interacts with ORMDL proteins, especially ORMDL3, which negatively regulate SPT activity in the presence of ceramides. Forms dimers of heterodimers with SPTLC1. Pyridoxal 5'-phosphate serves as cofactor. In terms of tissue distribution, expressed in astrocytes.

The protein resides in the endoplasmic reticulum membrane. It catalyses the reaction L-serine + hexadecanoyl-CoA + H(+) = 3-oxosphinganine + CO2 + CoA. The enzyme catalyses octadecanoyl-CoA + L-serine + H(+) = 3-oxoeicosasphinganine + CO2 + CoA. Its pathway is lipid metabolism; sphingolipid metabolism. With respect to regulation, SPT complex catalytic activity is negatively regulated by ORMDL proteins, including ORMDL3, in the presence of ceramides. This mechanism allows to maintain ceramide levels at sufficient concentrations for the production of complex sphingolipids, but which prevents the accumulation of ceramides to levels that trigger apoptosis. Functionally, component of the serine palmitoyltransferase multisubunit enzyme (SPT) that catalyzes the initial and rate-limiting step in sphingolipid biosynthesis by condensing L-serine and activated acyl-CoA (most commonly palmitoyl-CoA) to form long-chain bases. The SPT complex is composed of SPTLC1, SPTLC2 or SPTLC3 and SPTSSA or SPTSSB. Within this complex, the heterodimer consisting of SPTLC1 and SPTLC2/SPTLC3 forms the catalytic core. The composition of the serine palmitoyltransferase (SPT) complex determines the substrate preference. The SPTLC1-SPTLC2-SPTSSA complex shows a strong preference for C16-CoA substrate, while the SPTLC1-SPTLC3-SPTSSA isozyme uses both C14-CoA and C16-CoA as substrates, with a slight preference for C14-CoA. The SPTLC1-SPTLC2-SPTSSB complex shows a strong preference for C18-CoA substrate, while the SPTLC1-SPTLC3-SPTSSB isozyme displays an ability to use a broader range of acyl-CoAs, without apparent preference. Crucial for adipogenesis. The chain is Serine palmitoyltransferase 2 from Rattus norvegicus (Rat).